Here is a 305-residue protein sequence, read N- to C-terminus: tRNA dimethylallyltransferase (305 aa).

An ATP-binding site is contributed by 9-16 (GPTAVGKT). Position 11–16 (11–16 (TAVGKT)) interacts with substrate. Residues 34–37 (DSRQ) form an interaction with substrate tRNA region.

It belongs to the IPP transferase family. Monomer. The cofactor is Mg(2+).

It catalyses the reaction adenosine(37) in tRNA + dimethylallyl diphosphate = N(6)-dimethylallyladenosine(37) in tRNA + diphosphate. In terms of biological role, catalyzes the transfer of a dimethylallyl group onto the adenine at position 37 in tRNAs that read codons beginning with uridine, leading to the formation of N6-(dimethylallyl)adenosine (i(6)A). This chain is tRNA dimethylallyltransferase, found in Roseiflexus sp. (strain RS-1).